The primary structure comprises 70 residues: Large ribosomal subunit protein bL31 (70 aa).

Zn(2+) is bound by residues cysteine 16, cysteine 18, cysteine 37, and cysteine 40.

It belongs to the bacterial ribosomal protein bL31 family. Type A subfamily. As to quaternary structure, part of the 50S ribosomal subunit. Zn(2+) is required as a cofactor.

Its function is as follows. Binds the 23S rRNA. This chain is Large ribosomal subunit protein bL31, found in Saccharophagus degradans (strain 2-40 / ATCC 43961 / DSM 17024).